The primary structure comprises 86 residues: Neurotoxin 8-related gene product 1/2/3 (86 aa).

The N-terminal stretch at 1 to 19 (MNYLTMISLALLVMTGVES) is a signal peptide. Residues 22–84 (RDAYIADNKN…VPIKVPGKCN (63 aa)) enclose the LCN-type CS-alpha/beta domain. Intrachain disulfides connect Cys32/Cys83, Cys36/Cys56, Cys42/Cys66, and Cys46/Cys68. Residue Asn84 is modified to Asparagine amide.

This sequence belongs to the long (4 C-C) scorpion toxin superfamily. Sodium channel inhibitor family. Alpha subfamily. Expressed by the venom gland.

It is found in the secreted. In terms of biological role, binds voltage-dependently at site-3 of sodium channels (Nav) and inhibits the inactivation of the activated channels, thereby blocking neuronal transmission. In Androctonus mauritanicus mauritanicus (Scorpion), this protein is Neurotoxin 8-related gene product 1/2/3 (NTVIIIrgp1).